The sequence spans 230 residues: MADS-box transcription factor 50 (230 aa).

The region spanning 1 to 61 (MVRGKTQMKR…GKLYEFASAS (61 aa)) is the MADS-box domain. The K-box domain maps to 86–176 (IEQVKADADG…REKCKNQPPL (91 aa)). Positions 209–230 (GLPGRSRSSGGAAEDSQAMPHS) are disordered.

In terms of tissue distribution, expressed in mature leaves and at low levels in roots and young panicles.

It localises to the nucleus. Probable transcription factor active in flowering time control. May control internode elongation and promote floral transition phase. May act upstream of the floral regulators MADS1, MADS14, MADS15 and MADS18 in the floral induction pathway. In Oryza sativa subsp. japonica (Rice), this protein is MADS-box transcription factor 50 (MADS50).